Here is a 411-residue protein sequence, read N- to C-terminus: Arginine deiminase (411 aa).

The active-site Amidino-cysteine intermediate is Cys401.

The protein belongs to the arginine deiminase family.

It localises to the cytoplasm. The catalysed reaction is L-arginine + H2O = L-citrulline + NH4(+). It functions in the pathway amino-acid degradation; L-arginine degradation via ADI pathway; carbamoyl phosphate from L-arginine: step 1/2. The polypeptide is Arginine deiminase (Streptococcus equi subsp. zooepidemicus (strain MGCS10565)).